A 550-amino-acid chain; its full sequence is Chaperonin GroEL (550 aa).

Residues 30–33 (TLGP), K51, 87–91 (DGTTT), G415, and D497 each bind ATP.

Belongs to the chaperonin (HSP60) family. Forms a cylinder of 14 subunits composed of two heptameric rings stacked back-to-back. Interacts with the co-chaperonin GroES.

The protein resides in the cytoplasm. It carries out the reaction ATP + H2O + a folded polypeptide = ADP + phosphate + an unfolded polypeptide.. Its function is as follows. Together with its co-chaperonin GroES, plays an essential role in assisting protein folding. The GroEL-GroES system forms a nano-cage that allows encapsulation of the non-native substrate proteins and provides a physical environment optimized to promote and accelerate protein folding. In Yersinia enterocolitica, this protein is Chaperonin GroEL.